The following is a 316-amino-acid chain: HPr kinase/phosphorylase (316 aa).

Residues His143 and Lys164 contribute to the active site. 158 to 165 (GEAGSGKS) is a binding site for ATP. Ser165 contributes to the Mg(2+) binding site. Asp182 serves as the catalytic Proton acceptor; for phosphorylation activity. Proton donor; for dephosphorylation activity. The interval 206 to 215 (LEVRGLGVLN) is important for the catalytic mechanism of both phosphorylation and dephosphorylation. Glu207 serves as a coordination point for Mg(2+). Arg251 is a catalytic residue. The segment at 272 to 277 (PVMPGR) is important for the catalytic mechanism of dephosphorylation.

Belongs to the HPrK/P family. Homohexamer. The cofactor is Mg(2+).

It carries out the reaction [HPr protein]-L-serine + ATP = [HPr protein]-O-phospho-L-serine + ADP + H(+). The catalysed reaction is [HPr protein]-O-phospho-L-serine + phosphate + H(+) = [HPr protein]-L-serine + diphosphate. Catalyzes the ATP- as well as the pyrophosphate-dependent phosphorylation of a specific serine residue in HPr, a phosphocarrier protein of the phosphoenolpyruvate-dependent sugar phosphotransferase system (PTS). HprK/P also catalyzes the pyrophosphate-producing, inorganic phosphate-dependent dephosphorylation (phosphorolysis) of seryl-phosphorylated HPr (P-Ser-HPr). This is HPr kinase/phosphorylase from Xanthomonas euvesicatoria pv. vesicatoria (strain 85-10) (Xanthomonas campestris pv. vesicatoria).